Here is a 648-residue protein sequence, read N- to C-terminus: Macrolide export ATP-binding/permease protein MacB (648 aa).

In terms of domain architecture, ABC transporter spans 5 to 243; sequence LELKDIRRSY…TGGTEPVVNT (239 aa). 41–48 is an ATP binding site; the sequence is GASGSGKS. Helical transmembrane passes span 273 to 293, 523 to 543, 576 to 596, and 611 to 631; these read LLTM…VVVG, LFLT…VMNI, AVLV…LIAF, and PLAL…FGWL.

This sequence belongs to the ABC transporter superfamily. Macrolide exporter (TC 3.A.1.122) family. In terms of assembly, homodimer. Part of the tripartite efflux system MacAB-TolC, which is composed of an inner membrane transporter, MacB, a periplasmic membrane fusion protein, MacA, and an outer membrane component, TolC. The complex forms a large protein conduit and can translocate molecules across both the inner and outer membranes. Interacts with MacA.

Its subcellular location is the cell inner membrane. Part of the tripartite efflux system MacAB-TolC. MacB is a non-canonical ABC transporter that contains transmembrane domains (TMD), which form a pore in the inner membrane, and an ATP-binding domain (NBD), which is responsible for energy generation. Confers resistance against macrolides. In Escherichia coli O6:K15:H31 (strain 536 / UPEC), this protein is Macrolide export ATP-binding/permease protein MacB.